The sequence spans 434 residues: Serine hydroxymethyltransferase (434 aa).

Residues leucine 133 and 137 to 139 each bind (6S)-5,6,7,8-tetrahydrofolate; that span reads GHL. Lysine 242 bears the N6-(pyridoxal phosphate)lysine mark.

The protein belongs to the SHMT family. As to quaternary structure, homodimer. It depends on pyridoxal 5'-phosphate as a cofactor.

Its subcellular location is the cytoplasm. The enzyme catalyses (6R)-5,10-methylene-5,6,7,8-tetrahydrofolate + glycine + H2O = (6S)-5,6,7,8-tetrahydrofolate + L-serine. Its pathway is one-carbon metabolism; tetrahydrofolate interconversion. The protein operates within amino-acid biosynthesis; glycine biosynthesis; glycine from L-serine: step 1/1. Catalyzes the reversible interconversion of serine and glycine with tetrahydrofolate (THF) serving as the one-carbon carrier. This reaction serves as the major source of one-carbon groups required for the biosynthesis of purines, thymidylate, methionine, and other important biomolecules. Also exhibits THF-independent aldolase activity toward beta-hydroxyamino acids, producing glycine and aldehydes, via a retro-aldol mechanism. The chain is Serine hydroxymethyltransferase from Bradyrhizobium sp. (strain BTAi1 / ATCC BAA-1182).